A 156-amino-acid chain; its full sequence is Small ribosomal subunit protein uS7 (156 aa).

This sequence belongs to the universal ribosomal protein uS7 family. In terms of assembly, part of the 30S ribosomal subunit. Contacts proteins S9 and S11.

Functionally, one of the primary rRNA binding proteins, it binds directly to 16S rRNA where it nucleates assembly of the head domain of the 30S subunit. Is located at the subunit interface close to the decoding center, probably blocks exit of the E-site tRNA. In Cupriavidus necator (strain ATCC 17699 / DSM 428 / KCTC 22496 / NCIMB 10442 / H16 / Stanier 337) (Ralstonia eutropha), this protein is Small ribosomal subunit protein uS7.